Consider the following 391-residue polypeptide: UPF0229 protein BAA_0633 (391 aa).

Residues 1-16 (MGEENQPNYTISQENW) are compositionally biased toward polar residues. 2 disordered regions span residues 1-31 (MGEENQPNYTISQENWSLHRKGYDDQQRHQE) and 80-117 (HVGQGNGDSKVGDVVARDGSGGQKQKGPGKGQGAGDAA). Residues 21-31 (KGYDDQQRHQE) show a composition bias toward basic and acidic residues. The span at 98–115 (GSGGQKQKGPGKGQGAGD) shows a compositional bias: gly residues.

Belongs to the UPF0229 family.

This Bacillus anthracis (strain A0248) protein is UPF0229 protein BAA_0633.